Consider the following 305-residue polypeptide: Homeobox protein NANOGP8 (305 aa).

The interval 1-96 is disordered; that stretch reads MSVDPACPQS…KEDKVPVKKQ (96 aa). Residues 65–82 are compositionally biased toward polar residues; that stretch reads SPDSSTSPKGKQPTSAEN. A DNA-binding region (homeobox) is located at residues 95 to 154; it reads KQKTRTVFSSTQLCVLNDRFQRQKYLSLQQMQELSNILNLSYKQVKTWFQNQRMKSKRWQ. 8 consecutive repeat copies span residues 196-200, 201-205, 206-210, 216-220, 221-225, 226-230, 231-235, and 236-240. The segment at 196 to 240 is 8 X repeats starting with a Trp in each unit; the sequence is WSNQTWNNSTWSNQTQNIQSWSNHSWNTQTWCTQSWNNQAWNSPF. Positions 196–240 are sufficient for transactivation activity; the sequence is WSNQTWNNSTWSNQTQNIQSWSNHSWNTQTWCTQSWNNQAWNSPF. The sufficient for strong transactivation activity stretch occupies residues 241-305; it reads YNCGEESLQS…YSMNMQPEDV (65 aa).

This sequence belongs to the Nanog homeobox family.

The protein localises to the nucleus. Its function is as follows. May act as a transcription regulator. When overexpressed, promotes entry of cells into S phase and cell proliferation. This is Homeobox protein NANOGP8 (NANOGP8) from Homo sapiens (Human).